The chain runs to 214 residues: MASHEVDNAELGSASAHGTPGSEAGPEELNTSVYQPIDGSPDYQKAKLQVLGAIQILNAAMILALGVFLGSLQYPYHFQKHFFFFTFYTGYPIWGAVFFCSSGTLSVVAGIKPTRTWIQNSFGMNIASATIALVGTAFLSLNIAVNIQSLRSCHSSSESPDLCNYMGSISNGMVSLLLILTLLELCVTISTIAMWCNANCCNSREEISSPPNSV.

Residues 1–31 (MASHEVDNAELGSASAHGTPGSEAGPEELNT) form a disordered region. The Cytoplasmic portion of the chain corresponds to 1–49 (MASHEVDNAELGSASAHGTPGSEAGPEELNTSVYQPIDGSPDYQKAKLQ). A helical transmembrane segment spans residues 50–70 (VLGAIQILNAAMILALGVFLG). Residues 71–81 (SLQYPYHFQKH) lie on the Extracellular side of the membrane. The chain crosses the membrane as a helical span at residues 82–102 (FFFFTFYTGYPIWGAVFFCSS). Over 103-124 (GTLSVVAGIKPTRTWIQNSFGM) the chain is Cytoplasmic. The chain crosses the membrane as a helical span at residues 125-145 (NIASATIALVGTAFLSLNIAV). Residues 146-175 (NIQSLRSCHSSSESPDLCNYMGSISNGMVS) are Extracellular-facing. The chain crosses the membrane as a helical span at residues 176–196 (LLLILTLLELCVTISTIAMWC). The Cytoplasmic portion of the chain corresponds to 197-214 (NANCCNSREEISSPPNSV).

Belongs to the MS4A family. As to quaternary structure, interacts with CDKN3. Interacts with CDKN3-CDK2 complexes through its binding to CDKN3; this interaction facilitates dissociation of cyclin A from CDKN3-CDK2 complexes. In terms of tissue distribution, expressed specifically in hematopoietic cells and tissues.

The protein resides in the endomembrane system. It is found in the cytoplasm. The protein localises to the perinuclear region. Hematopoietic modulator for the G1-S cell cycle transition. Modulates the level of phosphorylation of cyclin-dependent kinase 2 (CDK2) through its direct binding to cyclin-dependent kinase inhibitor 3 (CDKN3/KAP). In Homo sapiens (Human), this protein is Membrane-spanning 4-domains subfamily A member 3 (MS4A3).